Here is a 95-residue protein sequence, read N- to C-terminus: HIG1 domain family member 1A, mitochondrial (95 aa).

At serine 2 the chain carries N-acetylserine. The HIG1 domain occupies 2-93 (STNTDLSLSS…YQEFWANPKP (92 aa)). Serine 8 carries the phosphoserine modification. 2 consecutive transmembrane segments (helical) span residues 28–48 (PFVP…LYKL) and 69–89 (GFVV…EFWA).

In terms of assembly, associates with cytochrome c oxidase (COX, complex IV); proposed complex component. Also associates with respiratory chain supercomplexes.

The protein localises to the mitochondrion membrane. Its subcellular location is the mitochondrion inner membrane. Functionally, proposed subunit of cytochrome c oxidase (COX, complex IV), which is the terminal component of the mitochondrial respiratory chain that catalyzes the reduction of oxygen to water. May play a role in the assembly of respiratory supercomplexes. This is HIG1 domain family member 1A, mitochondrial (Higd1a) from Mus musculus (Mouse).